The sequence spans 396 residues: Peroxisome proliferator-activated receptor delta (396 aa).

The tract at residues 1–24 is disordered; the sequence is MKEEIPPRSPILDEQPSTPLEHQE. Residues 15–24 are compositionally biased toward polar residues; that stretch reads QPSTPLEHQE. A DNA-binding region (nuclear receptor) is located at residues 28–102; the sequence is SVDCKICGDR…LGMSHNAIRF (75 aa). NR C4-type zinc fingers lie at residues 31–51 and 68–90; these read CKIC…CEGC and CDRN…FNKC. One can recognise an NR LBD domain in the interval 166-394; it reads FVIHDMDTLW…HPLLQEIYRD (229 aa).

This sequence belongs to the nuclear hormone receptor family. NR1 subfamily. As to quaternary structure, heterodimer with the retinoid X receptor. 'Lys-48'-linked polyubiquitinated; leading to proteasomal degradation. Deubiquitinated and stabilized by OTUD3. As to expression, ubiquitous.

The protein resides in the nucleus. In terms of biological role, ligand-activated transcription factor key mediator of energy metabolism in adipose tissues. Receptor that binds peroxisome proliferators such as hypolipidemic drugs and fatty acids. Has a preference for poly-unsaturated fatty acids, such as gamma-linoleic acid and eicosapentanoic acid. Once activated by a ligand, the receptor binds to promoter elements of target genes. Regulates the peroxisomal beta-oxidation pathway of fatty acids. Functions as a transcription activator for the acyl-CoA oxidase gene. Decreases expression of NPC1L1 once activated by a ligand. The sequence is that of Peroxisome proliferator-activated receptor delta (ppard) from Xenopus laevis (African clawed frog).